An 82-amino-acid chain; its full sequence is Delta-actitoxin-Aeq2a (82 aa).

Residues 1-19 (MNRLMILVFAAVFLALASA) form the signal peptide. Positions 20 to 26 (DEDVDIA) are excised as a propeptide. 3 disulfides stabilise this stretch: C32-C79, C34-C69, and C62-C80.

This sequence belongs to the sea anemone sodium channel inhibitory toxin family. Type I subfamily.

The protein localises to the secreted. The protein resides in the nematocyst. In terms of biological role, binds specifically to voltage-gated sodium channels (Nav), thereby delaying their inactivation during signal transduction. Causes death to crabs (minimum lethal dose of 25 ug/kg) and mice. The polypeptide is Delta-actitoxin-Aeq2a (Actinia equina (Beadlet anemone)).